The sequence spans 487 residues: MRAQPTASHYVNGRYIDDEQGAPLPVIYPATGETIAMLRSATPNVLELAIEAARAAQPAWARLKPVERGRILRRAADILRARNADLARIETLDTGKAIQETLVADAPSAADCLEYFGGAVAAYNGEAVDLGGPFAYTRREALGVCVGIGAWNYPIQIAGWKSAPALAMGNAMVFKPSENTPLSALALAEIYSEAGLPDGLFNVVQGYGDVGAGLVGHDVVAKVSVTGSVPTGRKVLSLAGSKMKHATMELGGKSPLIVFDDADIENAIGGAMLGNFYSTGQICSNGTRVFVQSGIHDRFVERLVERTKKIRIGNPLDPETQMGPLVSKAQHEKVVGYIGIGKQDGAVLACGGNVPSLQGFDGGFFVEPTVFTGVTDTMRIAREEIFGPVMSVLKFDGEDEVIDRANDTEFGLAAGVFTRDLPRAHRVIAELQAGTCWINAYNLTPVEIPFGGFKQSGIGRENSLAALALYSQLKSIYVETGDVASPY.

Positions 27 and 93 each coordinate K(+). NAD(+) is bound at residue 149–151; sequence GAW. Catalysis depends on lysine 161, which acts as the Charge relay system. Residues 175–178 and 228–231 each bind NAD(+); these read KPSE and SVPT. The active-site Proton acceptor is glutamate 249. Glycine 251, cysteine 283, and glutamate 384 together coordinate NAD(+). The Nucleophile role is filled by cysteine 283. Cysteine 283 is subject to Cysteine sulfenic acid (-SOH). Positions 454 and 457 each coordinate K(+). Glutamate 461 functions as the Charge relay system in the catalytic mechanism.

It belongs to the aldehyde dehydrogenase family. In terms of assembly, dimer of dimers. The cofactor is K(+).

It carries out the reaction betaine aldehyde + NAD(+) + H2O = glycine betaine + NADH + 2 H(+). The protein operates within amine and polyamine biosynthesis; betaine biosynthesis via choline pathway; betaine from betaine aldehyde: step 1/1. Functionally, involved in the biosynthesis of the osmoprotectant glycine betaine. Catalyzes the irreversible oxidation of betaine aldehyde to the corresponding acid. The protein is Betaine aldehyde dehydrogenase of Mesorhizobium japonicum (strain LMG 29417 / CECT 9101 / MAFF 303099) (Mesorhizobium loti (strain MAFF 303099)).